The primary structure comprises 512 residues: Dihydroniloticin synthase CYP71CD2 (512 aa).

The helical transmembrane segment at 1 to 21 (MNLQLDYFSITSFLVFLVVLF) threads the bilayer. Asn436 provides a ligand contact to heme.

It belongs to the cytochrome P450 family. Heme serves as cofactor. As to expression, mainly expressed in petioles and roots, and, to a lower extent, in leaves.

The protein localises to the membrane. The enzyme catalyses tirucalla-7,24-dien-3beta-ol + 2 reduced [NADPH--hemoprotein reductase] + 2 O2 = dihydroniloticin + 2 oxidized [NADPH--hemoprotein reductase] + 2 H2O + 2 H(+). Its pathway is secondary metabolite biosynthesis; terpenoid biosynthesis. Its function is as follows. Monooxygenase involved in the biosynthesis of limonoids triterpene natural products such as azadirachtin, an antifeedant widely used as bioinsecticide, and possessing many medicinal applications including anti-tumoral, anti-malarial, anti-rheumatic, antibacterial, anti-inflammatory, anti-pyretic and diuretic effects. Catalyzes the conversion of tirucalladienol to dihydroniloticin. The chain is Dihydroniloticin synthase CYP71CD2 from Melia azedarach (Chinaberry tree).